A 92-amino-acid polypeptide reads, in one-letter code: Small ribosomal subunit protein uS19 (92 aa).

It belongs to the universal ribosomal protein uS19 family.

In terms of biological role, protein S19 forms a complex with S13 that binds strongly to the 16S ribosomal RNA. The polypeptide is Small ribosomal subunit protein uS19 (Cyanothece sp. (strain PCC 7425 / ATCC 29141)).